A 394-amino-acid polypeptide reads, in one-letter code: Elongation factor Tu (394 aa).

In terms of domain architecture, tr-type G spans 10-204 (KPHVNVGTIG…ALDSYIPEPE (195 aa)). Positions 19 to 26 (GHVDHGKT) are G1. Position 19–26 (19–26 (GHVDHGKT)) interacts with GTP. Threonine 26 contacts Mg(2+). Residues 60–64 (GITIN) form a G2 region. The interval 81–84 (DCPG) is G3. Residues 81–85 (DCPGH) and 136–139 (NKCD) contribute to the GTP site. Positions 136–139 (NKCD) are G4. The interval 174–176 (SAL) is G5.

The protein belongs to the TRAFAC class translation factor GTPase superfamily. Classic translation factor GTPase family. EF-Tu/EF-1A subfamily. In terms of assembly, monomer.

Its subcellular location is the cytoplasm. The catalysed reaction is GTP + H2O = GDP + phosphate + H(+). Its function is as follows. GTP hydrolase that promotes the GTP-dependent binding of aminoacyl-tRNA to the A-site of ribosomes during protein biosynthesis. This Shewanella sp. (strain ANA-3) protein is Elongation factor Tu.